The sequence spans 227 residues: Cytochrome c oxidase subunit 2 (227 aa).

The Mitochondrial intermembrane portion of the chain corresponds to 1–14 (MAYPFQLGFQDATS). Residues 15 to 45 (PIMEELLHFHDHTLMIVFLISSLVLYIISSM) traverse the membrane as a helical segment. Residues 46-59 (LTTKLTHTSTMDAQ) are Mitochondrial matrix-facing. The chain crosses the membrane as a helical span at residues 60–87 (EVETIWTILPAIILILIALPSLRILYMM). The Mitochondrial intermembrane segment spans residues 88-227 (DEINNPSLTV…HFEEWSASML (140 aa)). His161, Cys196, Glu198, Cys200, His204, and Met207 together coordinate Cu cation. Glu198 is a Mg(2+) binding site.

Belongs to the cytochrome c oxidase subunit 2 family. Component of the cytochrome c oxidase (complex IV, CIV), a multisubunit enzyme composed of 14 subunits. The complex is composed of a catalytic core of 3 subunits MT-CO1, MT-CO2 and MT-CO3, encoded in the mitochondrial DNA, and 11 supernumerary subunits COX4I, COX5A, COX5B, COX6A, COX6B, COX6C, COX7A, COX7B, COX7C, COX8 and NDUFA4, which are encoded in the nuclear genome. The complex exists as a monomer or a dimer and forms supercomplexes (SCs) in the inner mitochondrial membrane with NADH-ubiquinone oxidoreductase (complex I, CI) and ubiquinol-cytochrome c oxidoreductase (cytochrome b-c1 complex, complex III, CIII), resulting in different assemblies (supercomplex SCI(1)III(2)IV(1) and megacomplex MCI(2)III(2)IV(2)). Found in a complex with TMEM177, COA6, COX18, COX20, SCO1 and SCO2. Interacts with TMEM177 in a COX20-dependent manner. Interacts with COX20. Interacts with COX16. Cu cation serves as cofactor.

The protein resides in the mitochondrion inner membrane. It catalyses the reaction 4 Fe(II)-[cytochrome c] + O2 + 8 H(+)(in) = 4 Fe(III)-[cytochrome c] + 2 H2O + 4 H(+)(out). Its function is as follows. Component of the cytochrome c oxidase, the last enzyme in the mitochondrial electron transport chain which drives oxidative phosphorylation. The respiratory chain contains 3 multisubunit complexes succinate dehydrogenase (complex II, CII), ubiquinol-cytochrome c oxidoreductase (cytochrome b-c1 complex, complex III, CIII) and cytochrome c oxidase (complex IV, CIV), that cooperate to transfer electrons derived from NADH and succinate to molecular oxygen, creating an electrochemical gradient over the inner membrane that drives transmembrane transport and the ATP synthase. Cytochrome c oxidase is the component of the respiratory chain that catalyzes the reduction of oxygen to water. Electrons originating from reduced cytochrome c in the intermembrane space (IMS) are transferred via the dinuclear copper A center (CU(A)) of subunit 2 and heme A of subunit 1 to the active site in subunit 1, a binuclear center (BNC) formed by heme A3 and copper B (CU(B)). The BNC reduces molecular oxygen to 2 water molecules using 4 electrons from cytochrome c in the IMS and 4 protons from the mitochondrial matrix. This Equus caballus (Horse) protein is Cytochrome c oxidase subunit 2 (MT-CO2).